Reading from the N-terminus, the 365-residue chain is GDSL lipase (365 aa).

Positions 1 to 27 are cleaved as a signal peptide; sequence MAVASRKLGALVLVAVLCLSLPTGCLS. Serine 40 serves as the catalytic Nucleophile. N-linked (GlcNAc...) asparagine glycosylation is found at asparagine 189 and asparagine 310. Residues aspartate 318 and histidine 321 each act as charge relay system in the active site.

It belongs to the 'GDSL' lipolytic enzyme family. In terms of tissue distribution, restricted to the pericarp during achene maturation. Expressed in the leaves of mature plants and seedlings, as well as in buds and flowers. Present in disk florets.

Its subcellular location is the secreted. The protein localises to the extracellular space. It catalyses the reaction (Z,S)-pyrethrolone + (1R,3R)-chrysanthemoyl-CoA = pyrethrin I + CoA. It carries out the reaction (Z,S)-pyrethrolone + (1R,3R)-pyrethroyl-CoA = pyrethrin II + CoA. The enzyme catalyses (Z,S)-jasmololone + (1R,3R)-chrysanthemoyl-CoA = jasmolin I + CoA. The catalysed reaction is (Z,S)-cinerolone + (1R,3R)-chrysanthemoyl-CoA = cinerin I + CoA. It catalyses the reaction (Z,S)-jasmololone + (1R,3R)-pyrethroyl-CoA = jasmolin II + CoA. It carries out the reaction (Z,S)-cinerolone + (1R,3R)-pyrethroyl-CoA = cinerin II + CoA. The protein operates within isoprenoid biosynthesis. Component of the monoterpenoid pyrethrins biosynthesis; pyrethrins are widely used plant-derived pesticide. Acyltransferase that catalyzes the esterification of terpene acids and lipid alcohol substrates into pyrethrins; mediates the transfer of a chrysanthemoyl moiety from the coenzyme A (CoA) thio-ester chrysanthemoyl CoA to pyrethrolone, and, to a lower extent, to jasmololone and cinerolone thus producing pyrethrins (e.g. pyrethrin type I). Can also use pyrethroyl CoA as substrate. Also has esterase activity, being able to cleave the ester bond of pyrethrin I, p-nitrophenyl butanoate and p-nitrophenyl octanoate to produce pyrethrolone and p-nitrophenol, respectively. This is GDSL lipase from Tanacetum cinerariifolium (Dalmatian daisy).